The following is a 585-amino-acid chain: uncharacterized protein (585 aa).

A run of 6 helical transmembrane segments spans residues 18–38 (FMWS…YPII), 55–75 (AAWV…ATFF), 128–148 (FFLS…AISL), 150–170 (VMFY…PFLA), 238–258 (IWSA…VALL), and 276–296 (VAFF…GFVI). In terms of domain architecture, ABC transmembrane type-1 spans 18–301 (FMWSLLAMLL…LGFVINMFSQ (284 aa)). Positions 335–570 (VHFKNVSLAY…GGYYKKIYDL (236 aa)) constitute an ABC transporter domain. Residue 369 to 376 (GPTGSGKS) coordinates ATP.

It belongs to the ABC transporter superfamily.

The protein resides in the cell membrane. This is an uncharacterized protein from Bacillus subtilis (strain 168).